Consider the following 464-residue polypeptide: 3-isopropylmalate dehydratase large subunit (464 aa).

Positions 337, 397, and 400 each coordinate [4Fe-4S] cluster.

Belongs to the aconitase/IPM isomerase family. LeuC type 1 subfamily. Heterodimer of LeuC and LeuD. [4Fe-4S] cluster serves as cofactor.

The catalysed reaction is (2R,3S)-3-isopropylmalate = (2S)-2-isopropylmalate. Its pathway is amino-acid biosynthesis; L-leucine biosynthesis; L-leucine from 3-methyl-2-oxobutanoate: step 2/4. Its function is as follows. Catalyzes the isomerization between 2-isopropylmalate and 3-isopropylmalate, via the formation of 2-isopropylmaleate. The sequence is that of 3-isopropylmalate dehydratase large subunit from Bacillus cytotoxicus (strain DSM 22905 / CIP 110041 / 391-98 / NVH 391-98).